Consider the following 223-residue polypeptide: Large ribosomal subunit protein bL25 (223 aa).

Residues 198 to 223 (EEIGDRPRSAEEGAAPVKERKLRESE) are disordered.

Belongs to the bacterial ribosomal protein bL25 family. CTC subfamily. In terms of assembly, part of the 50S ribosomal subunit; part of the 5S rRNA/L5/L18/L25 subcomplex. Contacts the 5S rRNA. Binds to the 5S rRNA independently of L5 and L18.

This is one of the proteins that binds to the 5S RNA in the ribosome where it forms part of the central protuberance. This is Large ribosomal subunit protein bL25 from Thermomicrobium roseum (strain ATCC 27502 / DSM 5159 / P-2).